Here is a 680-residue protein sequence, read N- to C-terminus: MTAEPNKPCQIKRDYPQLINLYPATAHNDAHYLSKLSIYQQRVFEAHSQQKLLVLGQMGLGNGLELLSWWRTQTNPNQRLLLKVFEPNPINAYELKLLWDQSASLAKVPELELLAQCLLHTEPTAIIGCQRLIFDDGRTTIDLHFGDIQSQLSSLIHSPLHPVQHWLVLPHLQNGLHQQIHWQMAKLSDDSATVATIGLNESSGLSETTVNRFQACGFEVRDFTCAEIQTNPQPDAILLHERHVLRRQDAKAYAFNPMAAILSSDAPSSIAIIGGGLASAHLALSLAERGQSTQIFCKDAKLGQGASGNRQGAIYPLLTPENDELSRFFQQAFLFSRRRVQALTSAPAPNQTPISHNFCGVLQTAHDERSQLRLDKIIQSQNWPSEIAYRVDAQQANCLANINIDKSGFFYPLAGWVCPYEYAEAALQKAQQLTAVKLHLETEILEIEHQSEGWYLITAKHRFGPFAQVVLANGAALTQFDASNKLQISPFRGQVSHVPAQFQLSQLATVLCANGYLTPSHEGLHCLGASYVKEPKHLDFCPQEQQENLAKMHESYPNQPWLEDIDMSGNNARVGVRMVTRDHFPMMGCAPDVAQIIKDYAEHQLTKESRHYWQTTPAPVHEGLYILGGLGSRGLSSGPLAAECLAAQLCGEPIPLDKATLCKLNPNRMWLRKLLKGKAL.

Residues 1–267 form a tRNA (mnm(5)s(2)U34)-methyltransferase region; it reads MTAEPNKPCQ…MAAILSSDAP (267 aa). An FAD-dependent cmnm(5)s(2)U34 oxidoreductase region spans residues 273-680; sequence IGGGLASAHL…LRKLLKGKAL (408 aa).

This sequence in the N-terminal section; belongs to the methyltransferase superfamily. tRNA (mnm(5)s(2)U34)-methyltransferase family. In the C-terminal section; belongs to the DAO family. The cofactor is FAD.

It is found in the cytoplasm. The enzyme catalyses 5-aminomethyl-2-thiouridine(34) in tRNA + S-adenosyl-L-methionine = 5-methylaminomethyl-2-thiouridine(34) in tRNA + S-adenosyl-L-homocysteine + H(+). Catalyzes the last two steps in the biosynthesis of 5-methylaminomethyl-2-thiouridine (mnm(5)s(2)U) at the wobble position (U34) in tRNA. Catalyzes the FAD-dependent demodification of cmnm(5)s(2)U34 to nm(5)s(2)U34, followed by the transfer of a methyl group from S-adenosyl-L-methionine to nm(5)s(2)U34, to form mnm(5)s(2)U34. The chain is tRNA 5-methylaminomethyl-2-thiouridine biosynthesis bifunctional protein MnmC from Shewanella putrefaciens (strain CN-32 / ATCC BAA-453).